Here is a 266-residue protein sequence, read N- to C-terminus: Glutamate racemase (266 aa).

Substrate contacts are provided by residues 9-10 and 41-42; these read DS and YG. The active-site Proton donor/acceptor is the cysteine 72. 73-74 serves as a coordination point for substrate; it reads NT. The Proton donor/acceptor role is filled by cysteine 183. Position 184–185 (184–185) interacts with substrate; the sequence is TH.

The protein belongs to the aspartate/glutamate racemases family.

It catalyses the reaction L-glutamate = D-glutamate. The protein operates within cell wall biogenesis; peptidoglycan biosynthesis. Functionally, provides the (R)-glutamate required for cell wall biosynthesis. The chain is Glutamate racemase from Listeria monocytogenes serotype 4b (strain CLIP80459).